A 119-amino-acid chain; its full sequence is Large ribosomal subunit protein bL19c (119 aa).

Belongs to the bacterial ribosomal protein bL19 family.

It localises to the plastid. Its subcellular location is the chloroplast. The sequence is that of Large ribosomal subunit protein bL19c from Mesostigma viride (Green alga).